The following is a 311-amino-acid chain: 3-oxo-4,17-pregnadiene-20-carboxyl-CoA hydratase alpha subunit (311 aa).

The interval 198-295 (WDGVKAHELR…VAIGMPVRAT (98 aa)) is DUF35.

The protein belongs to the thioester dehydratase family. As to quaternary structure, heterodimer composed of ChsH1 and ChsH2. Two heterodimers combine to form a heterotetramer. The complex interacts with Ltp2 via the DUF35 C-terminal region of ChsH2. The ChsH1-ChsH2-Ltp2 protein complex is composed of two protomers that form a heterohexameric structure through the Ltp2 dimerization interface.

It carries out the reaction 3-oxochola-4,17-dien-22-oyl-CoA + H2O = 17-hydroxy-3-oxochol-4-en-22-oyl-CoA. The enzyme catalyses (2E)-octenoyl-CoA + H2O = 3-hydroxyoctanoyl-CoA. It catalyses the reaction (2E)-decenoyl-CoA + H2O = 3-hydroxydecanoyl-CoA. The protein operates within steroid metabolism; cholesterol degradation. In the absence of the Ltp2 aldolase, ChsH1/ChsH2 can hydrate only about 30% of the 3-OPDC-CoA substrate. Complete turnover requires the presence of Ltp2. Functionally, involved in cholesterol side chain degradation. Catalyzes the hydration of 3-oxo-4,17-pregnadiene-20-carboxyl-CoA (3-OPDC-CoA) to form 17-hydroxy-3-oxo-4-pregnene-20-carboxyl-CoA (17-HOPC-CoA), in the modified beta-oxidation pathway for cholesterol side chain degradation. Can also use octenoyl-CoA and decenoyl-CoA, with lower efficiency. This is 3-oxo-4,17-pregnadiene-20-carboxyl-CoA hydratase alpha subunit from Mycobacterium tuberculosis (strain ATCC 25618 / H37Rv).